We begin with the raw amino-acid sequence, 91 residues long: Na(+)/H(+) antiporter subunit F (91 aa).

A run of 3 helical transmembrane segments spans residues 5–27, 34–53, and 63–82; these read ILMI…TLIG, IVAL…VIMM, and VVLV…SKFI.

It belongs to the CPA3 antiporters (TC 2.A.63) subunit F family. Forms a heterooligomeric complex that consists of seven subunits: MrpA, MrpB, MrpC, MrpD, MrpE, MrpF and MrpG.

The protein resides in the cell membrane. Functionally, mnh complex is a Na(+)Li(+)/H(+) antiporter involved in Na(+) and/or Li(+) excretion and Na(+) resistance. Na(+)/H(+) antiport consumes a transmembrane electrical potential, and is thus inferred to be electrogenic. Does not transport K(+), Ca(2+) or Mg(2+). In Alkalihalophilus pseudofirmus (strain ATCC BAA-2126 / JCM 17055 / OF4) (Bacillus pseudofirmus), this protein is Na(+)/H(+) antiporter subunit F (mrpF).